Here is a 92-residue protein sequence, read N- to C-terminus: N(2)-fixation sustaining protein CowN (92 aa).

This sequence belongs to the CowN family.

In terms of biological role, is required to sustain N(2)-dependent growth in the presence of low levels of carbon monoxide (CO). Probably acts by protecting the N(2) fixation ability of the nitrogenase complex, which is inactivated in the presence of CO. This is N(2)-fixation sustaining protein CowN from Cereibacter sphaeroides (strain KD131 / KCTC 12085) (Rhodobacter sphaeroides).